A 469-amino-acid polypeptide reads, in one-letter code: Glutamate--tRNA ligase (469 aa).

Positions 9 to 19 (PSPTGFLHVGG) match the 'HIGH' region motif. Positions 98, 100, 125, and 127 each coordinate Zn(2+). Residues 236-240 (KLSKR) carry the 'KMSKS' region motif. Residue K239 participates in ATP binding.

This sequence belongs to the class-I aminoacyl-tRNA synthetase family. Glutamate--tRNA ligase type 1 subfamily. In terms of assembly, monomer. The cofactor is Zn(2+).

Its subcellular location is the cytoplasm. The enzyme catalyses tRNA(Glu) + L-glutamate + ATP = L-glutamyl-tRNA(Glu) + AMP + diphosphate. Functionally, catalyzes the attachment of glutamate to tRNA(Glu) in a two-step reaction: glutamate is first activated by ATP to form Glu-AMP and then transferred to the acceptor end of tRNA(Glu). The protein is Glutamate--tRNA ligase of Shewanella loihica (strain ATCC BAA-1088 / PV-4).